The sequence spans 494 residues: Cysteine--tRNA ligase (494 aa).

Cys-29 serves as a coordination point for Zn(2+). Positions 31 to 41 (VTVYDHCHIGH) match the 'HIGH' region motif. 3 residues coordinate Zn(2+): Cys-209, His-234, and Glu-238. The 'KMSKS' region signature appears at 266–270 (KMSKS). Lys-269 serves as a coordination point for ATP.

Belongs to the class-I aminoacyl-tRNA synthetase family. Monomer. The cofactor is Zn(2+).

It localises to the cytoplasm. The enzyme catalyses tRNA(Cys) + L-cysteine + ATP = L-cysteinyl-tRNA(Cys) + AMP + diphosphate. The sequence is that of Cysteine--tRNA ligase from Geotalea daltonii (strain DSM 22248 / JCM 15807 / FRC-32) (Geobacter daltonii).